We begin with the raw amino-acid sequence, 612 residues long: Elongation factor 4 (612 aa).

The 183-residue stretch at 12–194 folds into the tr-type G domain; that stretch reads SRIRNFSIIA…QIVEKVPAPS (183 aa). GTP-binding positions include 24-29 and 141-144; these read DHGKST and NKID.

Belongs to the TRAFAC class translation factor GTPase superfamily. Classic translation factor GTPase family. LepA subfamily.

The protein localises to the cell membrane. It catalyses the reaction GTP + H2O = GDP + phosphate + H(+). In terms of biological role, required for accurate and efficient protein synthesis under certain stress conditions. May act as a fidelity factor of the translation reaction, by catalyzing a one-codon backward translocation of tRNAs on improperly translocated ribosomes. Back-translocation proceeds from a post-translocation (POST) complex to a pre-translocation (PRE) complex, thus giving elongation factor G a second chance to translocate the tRNAs correctly. Binds to ribosomes in a GTP-dependent manner. This is Elongation factor 4 from Bacillus licheniformis (strain ATCC 14580 / DSM 13 / JCM 2505 / CCUG 7422 / NBRC 12200 / NCIMB 9375 / NCTC 10341 / NRRL NRS-1264 / Gibson 46).